A 440-amino-acid chain; its full sequence is Argininosuccinate lyase (440 aa).

It belongs to the lyase 1 family. Argininosuccinate lyase subfamily.

It is found in the cytoplasm. It catalyses the reaction 2-(N(omega)-L-arginino)succinate = fumarate + L-arginine. The protein operates within amino-acid biosynthesis; L-arginine biosynthesis; L-arginine from L-ornithine and carbamoyl phosphate: step 3/3. This Clostridium botulinum (strain Loch Maree / Type A3) protein is Argininosuccinate lyase.